A 155-amino-acid chain; its full sequence is Ribosomal RNA large subunit methyltransferase H (155 aa).

S-adenosyl-L-methionine is bound by residues Leu72, Gly104, and 123-128; that span reads LAKITL.

The protein belongs to the RNA methyltransferase RlmH family. In terms of assembly, homodimer.

Its subcellular location is the cytoplasm. It catalyses the reaction pseudouridine(1915) in 23S rRNA + S-adenosyl-L-methionine = N(3)-methylpseudouridine(1915) in 23S rRNA + S-adenosyl-L-homocysteine + H(+). Its function is as follows. Specifically methylates the pseudouridine at position 1915 (m3Psi1915) in 23S rRNA. This chain is Ribosomal RNA large subunit methyltransferase H, found in Mycoplasma capricolum subsp. capricolum (strain California kid / ATCC 27343 / NCTC 10154).